A 363-amino-acid polypeptide reads, in one-letter code: Ribosomal RNA large subunit methyltransferase M (363 aa).

Residues Ser194, 227–230, Asp246, Asp266, and Asp284 contribute to the S-adenosyl-L-methionine site; that span reads CPGG. Lys313 (proton acceptor) is an active-site residue.

This sequence belongs to the class I-like SAM-binding methyltransferase superfamily. RNA methyltransferase RlmE family. RlmM subfamily. In terms of assembly, monomer.

It is found in the cytoplasm. The enzyme catalyses cytidine(2498) in 23S rRNA + S-adenosyl-L-methionine = 2'-O-methylcytidine(2498) in 23S rRNA + S-adenosyl-L-homocysteine + H(+). Its function is as follows. Catalyzes the 2'-O-methylation at nucleotide C2498 in 23S rRNA. This Haemophilus influenzae (strain PittEE) protein is Ribosomal RNA large subunit methyltransferase M.